A 149-amino-acid polypeptide reads, in one-letter code: Secreted RxLR effector protein 3 (149 aa).

An N-terminal signal peptide occupies residues 1 to 23 (MRASTILFVLGAAILAVIGVTTA). Positions 38–53 (RLLRSGSMEQEPDEER) match the RxLR-dEER motif.

The protein belongs to the RxLR effector family.

It localises to the secreted. The protein resides in the host nucleus. It is found in the host cytoplasm. Its function is as follows. Secreted effector that completely suppresses the host cell death induced by cell death-inducing proteins. The sequence is that of Secreted RxLR effector protein 3 from Plasmopara viticola (Downy mildew of grapevine).